A 360-amino-acid chain; its full sequence is Phospho-N-acetylmuramoyl-pentapeptide-transferase (360 aa).

Helical transmembrane passes span tyrosine 21–glycine 41, threonine 73–leucine 93, alanine 94–valine 114, tryptophan 132–glycine 152, isoleucine 168–glycine 188, glycine 199–threonine 219, valine 239–tyrosine 259, valine 263–leucine 283, phenylalanine 288–valine 308, and valine 338–lysine 358.

This sequence belongs to the glycosyltransferase 4 family. MraY subfamily. It depends on Mg(2+) as a cofactor.

The protein localises to the cell inner membrane. It carries out the reaction UDP-N-acetyl-alpha-D-muramoyl-L-alanyl-gamma-D-glutamyl-meso-2,6-diaminopimeloyl-D-alanyl-D-alanine + di-trans,octa-cis-undecaprenyl phosphate = di-trans,octa-cis-undecaprenyl diphospho-N-acetyl-alpha-D-muramoyl-L-alanyl-D-glutamyl-meso-2,6-diaminopimeloyl-D-alanyl-D-alanine + UMP. It functions in the pathway cell wall biogenesis; peptidoglycan biosynthesis. Its function is as follows. Catalyzes the initial step of the lipid cycle reactions in the biosynthesis of the cell wall peptidoglycan: transfers peptidoglycan precursor phospho-MurNAc-pentapeptide from UDP-MurNAc-pentapeptide onto the lipid carrier undecaprenyl phosphate, yielding undecaprenyl-pyrophosphoryl-MurNAc-pentapeptide, known as lipid I. The polypeptide is Phospho-N-acetylmuramoyl-pentapeptide-transferase (Haemophilus influenzae (strain 86-028NP)).